Here is a 632-residue protein sequence, read N- to C-terminus: Extracellular metalloproteinase 2 (632 aa).

The signal sequence occupies residues Met1–Gly19. Residues Leu20–Ser244 constitute a propeptide that is removed on maturation. N-linked (GlcNAc...) asparagine glycosylation is present at Asn270. His429 lines the Zn(2+) pocket. Glu430 is an active-site residue. Position 433 (His433) interacts with Zn(2+).

It belongs to the peptidase M36 family. Zn(2+) is required as a cofactor.

Its subcellular location is the secreted. Secreted metalloproteinase probably acting as a virulence factor. The sequence is that of Extracellular metalloproteinase 2 (MEP2) from Arthroderma benhamiae (Trichophyton mentagrophytes).